A 360-amino-acid chain; its full sequence is Archaemetzincin-2 (360 aa).

His254 provides a ligand contact to Zn(2+). Residue Glu255 is the Proton acceptor of the active site. Residues His258, His264, Cys265, Cys270, Cys289, and Cys292 each contribute to the Zn(2+) site.

It belongs to the peptidase M54 family. Requires Zn(2+) as cofactor.

In terms of biological role, probable zinc metalloprotease. In Pongo abelii (Sumatran orangutan), this protein is Archaemetzincin-2 (AMZ2).